A 504-amino-acid polypeptide reads, in one-letter code: Deoxyguanosinetriphosphate triphosphohydrolase (504 aa).

The 208-residue stretch at Arg-66–Cys-273 folds into the HD domain.

Belongs to the dGTPase family. Type 1 subfamily. Homotetramer. The cofactor is Mg(2+).

It carries out the reaction dGTP + H2O = 2'-deoxyguanosine + triphosphate + H(+). Functionally, dGTPase preferentially hydrolyzes dGTP over the other canonical NTPs. The protein is Deoxyguanosinetriphosphate triphosphohydrolase of Klebsiella pneumoniae subsp. pneumoniae (strain ATCC 700721 / MGH 78578).